Reading from the N-terminus, the 130-residue chain is Small ribosomal subunit protein uS9 (130 aa).

The protein belongs to the universal ribosomal protein uS9 family.

In Bacillus mycoides (strain KBAB4) (Bacillus weihenstephanensis), this protein is Small ribosomal subunit protein uS9.